We begin with the raw amino-acid sequence, 385 residues long: HAT1-interacting factor 1 (385 aa).

Residues 80–199 (GNLFGDALLA…RKSGFHIYFE (120 aa)) are important for interaction with heterotetrameric histone H3 and H4 and for interaction with dimeric histone H2A and H2B. 2 stretches are compositionally biased toward low complexity: residues 85-97 (DALLAGDDGSGSE) and 105-116 (DVSNGEEGNENG). A disordered region spans residues 85–163 (DALLAGDDGS…EEENVEKEEE (79 aa)). Over residues 129 to 160 (DQEEEDLTGDVDSGDSEDSGEGSEEEEENVEK) the composition is skewed to acidic residues. Serine 174 bears the Phosphoserine mark. TPR repeat units follow at residues 186 to 220 (VSQLRKSGFHIYFENDLYENALDLLAQALMLLGRP), 229 to 262 (ENSRLRIGDVYILMGDIEREAEMFSRAIHHYLKA), and 289 to 322 (ALRWVDQVPAKDKLKRFKHAKALLEKHMTTRPKD). Positions 248 to 332 (EAEMFSRAIH…SELQQARLAQ (85 aa)) are interaction with dimeric histone H2A and H2B. Residues 340–385 (VQENQQHGSKRPLSQPTTSIGFPALEKPLGDFNDLSQLVKKKPRRH) form a disordered region. Residues 342–359 (ENQQHGSKRPLSQPTTSI) are compositionally biased toward polar residues.

This sequence belongs to the NASP family. As to quaternary structure, homodimer. The homodimer interacts with a histone tetramer containing H3 and H4; the interaction is direct. The homodimer interacts with heterodimeric histone H2A and H2B; the interaction is direct. Component of the nuclear histone acetyltransferase B (HAT-B) complex composed of at least HAT1, HAT2 and HIF1. Does not interact with HAT1 in the absence of HAT2. Interacts with histones H3 and H4 in a HAT1/HAT2 dependent manner. Interaction with heterotetrameric histone H3 and H4 precludes interaction with dimeric histone H2A and H2B, irrespective of the fact that their binding involves non-identical regions of the protein.

It is found in the nucleus. Histone H3 and H4 specific chaperone component of the nuclear histone acetyltransferase B (HAT-B) complex. Involved in chromatin assembly and telomere silencing. The sequence is that of HAT1-interacting factor 1 (HIF1) from Saccharomyces cerevisiae (strain ATCC 204508 / S288c) (Baker's yeast).